Reading from the N-terminus, the 150-residue chain is Myeloid-derived growth factor homolog (150 aa).

A signal peptide spans 1–22; the sequence is MTFLKYLLILCTIFLMVTNSLS.

This sequence belongs to the MYDGF family.

The protein resides in the secreted. This chain is Myeloid-derived growth factor homolog, found in Dictyostelium discoideum (Social amoeba).